Reading from the N-terminus, the 702-residue chain is DNA ligase (702 aa).

Residues 32–36 (DAEYD) and 81–82 (SL) contribute to the NAD(+) site. Residues 104–125 (AESSAQKASLNPLVRDSDQKNR) are disordered. Glu139 contacts NAD(+). Lys141 serves as the catalytic N6-AMP-lysine intermediate. The NAD(+) site is built by Arg162, Glu199, Lys316, and Lys340. Residues Cys434, Cys437, Cys452, and Cys458 each coordinate Zn(2+). One can recognise a BRCT domain in the interval 616-702 (KPNHPFRDKT…KALKPEGTKV (87 aa)).

The protein belongs to the NAD-dependent DNA ligase family. LigA subfamily. Requires Mg(2+) as cofactor. Mn(2+) serves as cofactor.

The enzyme catalyses NAD(+) + (deoxyribonucleotide)n-3'-hydroxyl + 5'-phospho-(deoxyribonucleotide)m = (deoxyribonucleotide)n+m + AMP + beta-nicotinamide D-nucleotide.. Its function is as follows. DNA ligase that catalyzes the formation of phosphodiester linkages between 5'-phosphoryl and 3'-hydroxyl groups in double-stranded DNA using NAD as a coenzyme and as the energy source for the reaction. It is essential for DNA replication and repair of damaged DNA. In Hamiltonella defensa subsp. Acyrthosiphon pisum (strain 5AT), this protein is DNA ligase.